Reading from the N-terminus, the 874-residue chain is Alanine--tRNA ligase (874 aa).

Zn(2+) contacts are provided by histidine 564, histidine 568, cysteine 665, and histidine 669.

This sequence belongs to the class-II aminoacyl-tRNA synthetase family. Requires Zn(2+) as cofactor.

The protein resides in the cytoplasm. The catalysed reaction is tRNA(Ala) + L-alanine + ATP = L-alanyl-tRNA(Ala) + AMP + diphosphate. Functionally, catalyzes the attachment of alanine to tRNA(Ala) in a two-step reaction: alanine is first activated by ATP to form Ala-AMP and then transferred to the acceptor end of tRNA(Ala). Also edits incorrectly charged Ser-tRNA(Ala) and Gly-tRNA(Ala) via its editing domain. The protein is Alanine--tRNA ligase of Cupriavidus necator (strain ATCC 17699 / DSM 428 / KCTC 22496 / NCIMB 10442 / H16 / Stanier 337) (Ralstonia eutropha).